Here is a 416-residue protein sequence, read N- to C-terminus: Lipid III flippase (416 aa).

The Cytoplasmic segment spans residues 1 to 17 (MSLAKASLWTAASTLVK). A helical transmembrane segment spans residues 18–38 (IGAGLLVGKLLAVSFGPAGLG). At 39–45 (LAANFRQ) the chain is on the periplasmic side. The helical transmembrane segment at 46–66 (LITVLGVLAGAGIFNGVTKYV) threads the bilayer. Over 67 to 84 (AQYHDNPQQLRRVVGTSS) the chain is Cytoplasmic. Residues 85–105 (AMVLGFSTLMALVFVLAAAPI) traverse the membrane as a helical segment. Residues 106–121 (SQGLFGNTDYQGLVRL) are Periplasmic-facing. The helical transmembrane segment at 122-142 (VALVQMGIAWGNLLLALMKGF) threads the bilayer. Residues 143–144 (RD) lie on the Cytoplasmic side of the membrane. Residues 145–165 (AAGNALSLIVGSLIGVLAYYV) traverse the membrane as a helical segment. Residues 166–174 (SYRLGGYEG) lie on the Periplasmic side of the membrane. The helical transmembrane segment at 175–195 (ALLGLALIPALVVIPAAIMLI) threads the bilayer. The Cytoplasmic portion of the chain corresponds to 196–216 (KRGVIPLSYLKPSWDNGLAGQ). A helical membrane pass occupies residues 217–237 (LSKFTLMALITSVTLPVAYIM). At 238 to 259 (MRKLLAAQYSWDEVGIWQGVSS) the chain is on the periplasmic side. A helical membrane pass occupies residues 260 to 280 (ISDAYLQFITASFSVYLLPTL). Topologically, residues 281–302 (SRLTEKRDITREVVKSLKFVLP) are cytoplasmic. Residues 303–323 (AVAAASFTVWLLRDFAIWLLL) form a helical membrane-spanning segment. Residues 324-334 (SNKFTAMRDLF) are Periplasmic-facing. Residues 335 to 355 (AWQLVGDVLKVGAYVFGYLVI) traverse the membrane as a helical segment. Residues 356–370 (AKASLRFYILAEVSQ) lie on the Cytoplasmic side of the membrane. Helical transmembrane passes span 371–391 (FTLL…LGAA) and 392–412 (QAYM…FLLW). The Cytoplasmic segment spans residues 413 to 416 (RRRA).

It belongs to the polysaccharide transport (PST) (TC 2.A.66.2) family. In terms of assembly, probably part of a complex composed of WzxE, WzyE and WzzE.

The protein resides in the cell inner membrane. Its pathway is bacterial outer membrane biogenesis; enterobacterial common antigen biosynthesis. In terms of biological role, mediates the transbilayer movement of Und-PP-GlcNAc-ManNAcA-Fuc4NAc (lipid III) from the inner to the outer leaflet of the cytoplasmic membrane during the assembly of enterobacterial common antigen (ECA). Required for the assembly of the phosphoglyceride-linked form of ECA (ECA(PG)) and the water-soluble cyclic form of ECA (ECA(CYC)). Could also mediate the translocation of Und-PP-GlcNAc. The polypeptide is Lipid III flippase (Escherichia coli (strain K12)).